The chain runs to 176 residues: MLQSPSSPYPRTITLIGMMGVGKSTIGRRLASQLNMPFSDSDLEIEEAAGQSITEIFARYGENYFRNGERRVISRLIAGEPKVLAVGGGAFMDEETRKLVLEKTLAIWVKADIDTLAERVTKQADRPLLIGHDVRTRLQELADIRDSFYAMAPLHVWTGAQPHEEIVDAIIMALPR.

Position 17-24 (17-24 (GMMGVGKS)) interacts with ATP.

The protein belongs to the shikimate kinase family.

Its subcellular location is the cytoplasm. The catalysed reaction is shikimate + ATP = 3-phosphoshikimate + ADP + H(+). The protein operates within metabolic intermediate biosynthesis; chorismate biosynthesis; chorismate from D-erythrose 4-phosphate and phosphoenolpyruvate: step 5/7. The sequence is that of Shikimate kinase from Zymomonas mobilis subsp. mobilis (strain ATCC 31821 / ZM4 / CP4).